The following is a 705-amino-acid chain: DNA ligase (705 aa).

Residues 43–47 (DAEYD), 92–93 (SL), and Asp123 contribute to the NAD(+) site. Residue Lys125 is the N6-AMP-lysine intermediate of the active site. Positions 146, 184, 304, and 328 each coordinate NAD(+). Zn(2+)-binding residues include Cys422, Cys425, Cys440, and Cys445. Positions 607–696 (TPVTPLAGKK…EEISGQAADD (90 aa)) constitute a BRCT domain. Residues 684 to 705 (SESEEISGQAADDYENSLLRVQ) form a disordered region.

This sequence belongs to the NAD-dependent DNA ligase family. LigA subfamily. It depends on Mg(2+) as a cofactor. Mn(2+) serves as cofactor.

It catalyses the reaction NAD(+) + (deoxyribonucleotide)n-3'-hydroxyl + 5'-phospho-(deoxyribonucleotide)m = (deoxyribonucleotide)n+m + AMP + beta-nicotinamide D-nucleotide.. DNA ligase that catalyzes the formation of phosphodiester linkages between 5'-phosphoryl and 3'-hydroxyl groups in double-stranded DNA using NAD as a coenzyme and as the energy source for the reaction. It is essential for DNA replication and repair of damaged DNA. The protein is DNA ligase of Oleidesulfovibrio alaskensis (strain ATCC BAA-1058 / DSM 17464 / G20) (Desulfovibrio alaskensis).